The sequence spans 469 residues: tRNA-2-methylthio-N(6)-dimethylallyladenosine synthase (469 aa).

Residues 27-142 form the MTTase N-terminal domain; sequence KKVYIRTFGC…LPQMLAQRAR (116 aa). [4Fe-4S] cluster is bound by residues Cys-36, Cys-73, Cys-105, Cys-179, Cys-183, and Cys-186. The region spanning 165-398 is the Radical SAM core domain; the sequence is KVDGAAAFVS…QATIEDNVRR (234 aa). The 67-residue stretch at 401–467 folds into the TRAM domain; it reads ERRVGTVQRV…PHSLRGEPVL (67 aa).

This sequence belongs to the methylthiotransferase family. MiaB subfamily. In terms of assembly, monomer. The cofactor is [4Fe-4S] cluster.

It is found in the cytoplasm. It carries out the reaction N(6)-dimethylallyladenosine(37) in tRNA + (sulfur carrier)-SH + AH2 + 2 S-adenosyl-L-methionine = 2-methylsulfanyl-N(6)-dimethylallyladenosine(37) in tRNA + (sulfur carrier)-H + 5'-deoxyadenosine + L-methionine + A + S-adenosyl-L-homocysteine + 2 H(+). Its function is as follows. Catalyzes the methylthiolation of N6-(dimethylallyl)adenosine (i(6)A), leading to the formation of 2-methylthio-N6-(dimethylallyl)adenosine (ms(2)i(6)A) at position 37 in tRNAs that read codons beginning with uridine. This is tRNA-2-methylthio-N(6)-dimethylallyladenosine synthase from Leptothrix cholodnii (strain ATCC 51168 / LMG 8142 / SP-6) (Leptothrix discophora (strain SP-6)).